Here is a 202-residue protein sequence, read N- to C-terminus: Transmembrane 4 L6 family member 1 (202 aa).

At 1–9 (MCSSKCTRY) the chain is on the cytoplasmic side. Residues 10 to 30 (IGHSLVVFAVLCIVANILLYF) traverse the membrane as a helical segment. Residues 31–49 (PNGETKYAYEDHLSRFVWF) are Extracellular-facing. A helical membrane pass occupies residues 50 to 70 (FAGIVGGGLLILLPAFVFLGL). At 71 to 93 (EGEDCCGCWSCENYGKRCTMLSS) the chain is on the cytoplasmic side. Residues 94-114 (IMAALIGIAGSGYCVIVAALG) form a helical membrane-spanning segment. Over 115–161 (LAEGPKCGDSHGMWNYTFANTDGQYLLDPTTWSKCHEPNNIVEWNVT) the chain is Extracellular. N-linked (GlcNAc...) asparagine glycosylation is found at asparagine 129 and asparagine 159. The helical transmembrane segment at 162–182 (LFSILLALGGLEFILCLIQVI) threads the bilayer. Residues 183-202 (NGVLEGMCSYCCSHQQQYDC) lie on the Cytoplasmic side of the membrane.

This sequence belongs to the L6 tetraspanin family. In terms of assembly, present in high molecular weight complexes in tumor cells. Interacts with SDCBP2.

Its subcellular location is the membrane. The polypeptide is Transmembrane 4 L6 family member 1 (TM4SF1) (Mesocricetus auratus (Golden hamster)).